Here is a 1111-residue protein sequence, read N- to C-terminus: Cell death abnormality protein 1 (1111 aa).

An N-terminal signal peptide occupies residues 1–18; sequence MRLILLVLLATWQVVVDT. Residues 19–910 lie on the Extracellular side of the membrane; the sequence is RAPTFPDKLT…NGAGRSTGLT (892 aa). Positions 41–113 constitute an EMI domain; it reads GDHVCTVKTI…QCCDGYYQTK (73 aa). 15 disulfides stabilise this stretch: Cys45/Cys106, Cys71/Cys80, Cys105/Cys117, Cys121/Cys130, Cys125/Cys136, Cys138/Cys147, Cys160/Cys172, Cys166/Cys179, Cys181/Cys190, Cys203/Cys215, Cys209/Cys221, Cys223/Cys232, Cys245/Cys257, Cys251/Cys264, and Cys266/Cys275. An N-linked (GlcNAc...) asparagine glycan is attached at Asn66. EGF-like domains lie at 118 to 148, 156 to 191, 199 to 233, and 241 to 276; these read LPDC…KYCA, WGLG…ERCE, WGPN…EFCL, and FGAE…ALCE. 2 N-linked (GlcNAc...) asparagine glycosylation sites follow: Asn333 and Asn345. In terms of domain architecture, EGF-like 5 spans 421–458; that stretch reads YGPNCEKQAMCDWNHASECNPETGSCVCKPGRTGKNCS. Cystine bridges form between Cys425–Cys439, Cys431–Cys446, and Cys448–Cys457. The N-linked (GlcNAc...) asparagine glycan is linked to Asn456. The FU repeat unit spans residues 629–680; it reads DQKCDPNTFGFLCQETVTPSPCASTDPKNGVCLSCPPGSSGIHCEHNCPAGS. In terms of domain architecture, EGF-like 6 spans 681 to 716; sequence YGDGCQQVCSCADGHGCDPTTGECICEPGYHGKTCS. 3 cysteine pairs are disulfide-bonded: Cys685-Cys697, Cys691-Cys704, and Cys706-Cys715. The helical transmembrane segment at 911 to 931 threads the bilayer; the sequence is WFFVLLIVALCGGLGLIALFY. The interval 931–1007 is interaction with trim-21; that stretch reads YRNKYQKEKD…EEELENKKIH (77 aa). Residues 932–1111 are Cytoplasmic-facing; sequence RNKYQKEKDP…KKRAQDNLYT (180 aa). Disordered regions lie at residues 940–993 and 1006–1111; these read DPDM…PNGL and IHGR…NLYT. The NPXY signature appears at 962–965; that stretch reads NPLY. Over residues 963–980 the composition is skewed to polar residues; that stretch reads PLYSRQSVFPDSDAFSSE. A Phosphotyrosine; by SRC modification is found at Tyr1019. A YXXL motif is present at residues 1019–1022; the sequence is YASL. Low complexity predominate over residues 1030 to 1039; it reads SSSSASASAS. Positions 1068–1083 are enriched in polar residues; that stretch reads NSISPAHAVTTSNHNE.

In terms of assembly, interacts (via C-terminus) with ced-6 (via PTB domain). Interacts with nck-1; the interaction is required for ced-1 degradation through the proteasome pathway. Interacts with V-ATPase vha-10. In terms of processing, phosphorylation of Tyr-1019, within the YXXL motif, by src-1 is thought to initiate phagosomal formation. 'Lys-48'-linked polyubiquitination by trim-21 leads to proteasomal degradation. Expressed in engulfing cells and syncytium hypodermal cells. Ced-7 is necessary for clustering around cell corpses prior to engulfment.

It is found in the cell membrane. Its subcellular location is the cytoplasmic vesicle. The protein resides in the phagosome membrane. In terms of biological role, involved in programmed cell death, also called apoptosis, in both somatic and germ cells. Acts by recruiting ced-6 to phagosomes which enables actin-dependent cytoskeletal reorganization and subsequent engulfment of the apoptotic cell corpse. Has a role in the association of ppk-3 and rab-7 with the phagosomal surface which is necessary for the incorporation of lysosomes to phagosomes during phagosome maturation. Activates the expression of unfolded protein response genes, which are involved in the immune response to live bacteria. This chain is Cell death abnormality protein 1, found in Caenorhabditis elegans.